The primary structure comprises 583 residues: MVSDRSCIGYLRSVIAGSVDTHTGHECTITNHAAEEGGGTAAAAAVKVMTVSGSGKRGRYVRQVTGRHNDTDLHVAARGGDAGALRRALDEAAAAVATGEGREALEEVRRAVAAEPNEAGETPLVAAAERGHLEVVRELLRHLDAEGVAAKNRSGYDALHVAAREGRHAVVQEMLLHNRLLAKTFGPANTSPLISAATRGHTEVVKLLLELDDFGLVEMAKDNGKNSLHFAARQGHVEIVKALLEKDPQLARRNDKKGQTALHMAVKGTNCDVLRALVDADPAIVMLPDKNGNTALHVATRKKRAEIVAVLLRLPDTHVNALTRDHKTAYDIAEALPLCEESSEIKDILSQHGALRSRELNQPRDELRKTVTEIKKDVHTQLEQTRKTNKNVHGIAKELRKLHREGINNATNSVTVVAVLFATVAFAAIFTVPGGNANNGVAVVVQAASFRIFFIFNAIALFTSLAVVVVQITVVRGETKSERKVVEVINKLMWLASVCTTISFIASCYIVLGRHFQWAALLVSLIGGITMAGVLGTMTYYVVKSKRMRKIRKKEKMSRRSGSSSWYDNTELSETELNQVYAL.

ANK repeat units follow at residues 68–97, 119–148, 154–183, 188–218, 223–252, 257–286, and 291–321; these read HNDTDLHVAARGGDAGALRRALDEAAAAVA, AGETPLVAAAERGHLEVVRELLRHLDAEGV, SGYDALHVAAREGRHAVVQEMLLHNRLLAK, ANTSPLISAATRGHTEVVKLLLELDDFGLVE, NGKNSLHFAARQGHVEIVKALLEKDPQLAR, KGQTALHMAVKGTNCDVLRALVDADPAIVM, and NGNTALHVATRKKRAEIVAVLLRLPDTHVNA. 4 helical membrane passes run 414-434, 452-472, 492-512, and 518-538; these read VTVVAVLFATVAFAAIFTVPG, IFFIFNAIALFTSLAVVVVQI, LMWLASVCTTISFIASCYIVL, and WAALLVSLIGGITMAGVLGTM.

It is found in the cell membrane. In terms of biological role, involved in salt stress tolerance. This chain is Ankyrin repeat-containing protein NPR4, found in Oryza sativa subsp. japonica (Rice).